The following is an 89-amino-acid chain: Small ribosomal subunit protein uS14 (89 aa).

It belongs to the universal ribosomal protein uS14 family. Part of the 30S ribosomal subunit. Contacts proteins S3 and S10.

In terms of biological role, binds 16S rRNA, required for the assembly of 30S particles and may also be responsible for determining the conformation of the 16S rRNA at the A site. This chain is Small ribosomal subunit protein uS14, found in Flavobacterium psychrophilum (strain ATCC 49511 / DSM 21280 / CIP 103535 / JIP02/86).